The primary structure comprises 179 residues: Transcription factor BOA15 (179 aa).

The protein localises to the nucleus. Functionally, transcription factor that probably coregulates the gene clusters that mediates the biosynthesis of botcinin acid and its botcinin derivatives, acetate-derived polyketides that contribute to virulence when combined with the sesquiterpene botrydial. Botcinin acid and its derivatives have been shown to induce chlorosis and necrosis during host plant infection, but also have antifungal activities. The chain is Transcription factor BOA15 from Botryotinia fuckeliana (strain B05.10) (Noble rot fungus).